The primary structure comprises 536 residues: Cytochrome c oxidase subunit 1 (536 aa).

The chain crosses the membrane as a helical span at residues 19 to 39 (IGMTYLGFGMLSAMMGTGMSV). Glu-44 provides a ligand contact to Ca(2+). His-67 provides a ligand contact to Fe(II)-heme a. Helical transmembrane passes span 69–89 (LLMM…NFFL), 103–123 (LNNI…CSVL), 152–172 (AMFA…NFMV), 188–208 (PLFA…LPVL), 240–260 (LFWF…FGVM), and 273–293 (FGEM…FLVW). His-246 contacts Cu cation. A cross-link (1'-histidyl-3'-tyrosine (His-Tyr)) is located at residues 246–250 (HPEVY). Tyr-250 is a binding site for O2. Cu cation-binding residues include His-295 and His-296. A run of 2 helical transmembrane segments spans residues 315–335 (MVIA…IYGG) and 341–361 (VPML…LTGV). His-373 and Asp-374 together coordinate Mg(2+). Position 381 (His-381) interacts with heme a3. His-383 is a binding site for Fe(II)-heme a. The next 2 membrane-spanning stretches (helical) occupy residues 388–408 (MGAL…MFGL) and 418–438 (HFWL…FLGL). Position 446 (Pro-446) interacts with Ca(2+). Residues 461 to 481 (MGSAMSVMSVLVGLKSVLVQL) traverse the membrane as a helical segment.

This sequence belongs to the heme-copper respiratory oxidase family. In terms of assembly, component of the cytochrome c oxidase (complex IV, CIV), a multisubunit enzyme composed of a catalytic core of 3 subunits and several supernumerary subunits. The complex exists as a monomer or a dimer and forms supercomplexes (SCs) in the inner mitochondrial membrane with ubiquinol-cytochrome c oxidoreductase (cytochrome b-c1 complex, complex III, CIII). Heme serves as cofactor. It depends on Cu cation as a cofactor.

The protein resides in the mitochondrion inner membrane. It catalyses the reaction 4 Fe(II)-[cytochrome c] + O2 + 8 H(+)(in) = 4 Fe(III)-[cytochrome c] + 2 H2O + 4 H(+)(out). It participates in energy metabolism; oxidative phosphorylation. Component of the cytochrome c oxidase, the last enzyme in the mitochondrial electron transport chain which drives oxidative phosphorylation. The respiratory chain contains 3 multisubunit complexes succinate dehydrogenase (complex II, CII), ubiquinol-cytochrome c oxidoreductase (cytochrome b-c1 complex, complex III, CIII) and cytochrome c oxidase (complex IV, CIV), that cooperate to transfer electrons derived from NADH and succinate to molecular oxygen, creating an electrochemical gradient over the inner membrane that drives transmembrane transport and the ATP synthase. Cytochrome c oxidase is the component of the respiratory chain that catalyzes the reduction of oxygen to water. Electrons originating from reduced cytochrome c in the intermembrane space (IMS) are transferred via the dinuclear copper A center (CU(A)) of subunit 2 and heme A of subunit 1 to the active site in subunit 1, a binuclear center (BNC) formed by heme A3 and copper B (CU(B)). The BNC reduces molecular oxygen to 2 water molecules using 4 electrons from cytochrome c in the IMS and 4 protons from the mitochondrial matrix. The sequence is that of Cytochrome c oxidase subunit 1 (COX1) from Debaryomyces hansenii (strain ATCC 36239 / CBS 767 / BCRC 21394 / JCM 1990 / NBRC 0083 / IGC 2968) (Yeast).